The following is a 487-amino-acid chain: Betaine aldehyde dehydrogenase (487 aa).

K(+)-binding residues include isoleucine 27 and aspartate 93. 149-151 (GAW) contributes to the NAD(+) binding site. The active-site Charge relay system is the lysine 161. NAD(+) is bound by residues 175–178 (KPSE) and 228–231 (SVPT). Residue leucine 243 coordinates K(+). Glutamate 249 (proton acceptor) is an active-site residue. Glycine 251, cysteine 283, and glutamate 384 together coordinate NAD(+). Cysteine 283 acts as the Nucleophile in catalysis. Residue cysteine 283 is modified to Cysteine sulfenic acid (-SOH). Residues lysine 454 and glycine 457 each coordinate K(+). Glutamate 461 (charge relay system) is an active-site residue.

It belongs to the aldehyde dehydrogenase family. In terms of assembly, dimer of dimers. K(+) is required as a cofactor.

It carries out the reaction betaine aldehyde + NAD(+) + H2O = glycine betaine + NADH + 2 H(+). It participates in amine and polyamine biosynthesis; betaine biosynthesis via choline pathway; betaine from betaine aldehyde: step 1/1. In terms of biological role, involved in the biosynthesis of the osmoprotectant glycine betaine. Catalyzes the irreversible oxidation of betaine aldehyde to the corresponding acid. The chain is Betaine aldehyde dehydrogenase from Brucella melitensis biotype 2 (strain ATCC 23457).